The primary structure comprises 54 residues: Putative ATP synthase subunit epsilon, mitochondrial (54 aa).

The protein belongs to the eukaryotic ATPase epsilon family. As to quaternary structure, F-type ATPases have 2 components, CF(1) - the catalytic core - and CF(0) - the membrane proton channel. CF(1) has five subunits: alpha(3), beta(3), gamma(1), delta(1), epsilon(1). CF(0) seems to have nine subunits: a, b, c, d, e, f, g, F6 and 8 (or A6L).

The protein resides in the mitochondrion. The protein localises to the mitochondrion inner membrane. Its function is as follows. Mitochondrial membrane ATP synthase (F(1)F(0) ATP synthase or Complex V) produces ATP from ADP in the presence of a proton gradient across the membrane which is generated by electron transport complexes of the respiratory chain. F-type ATPases consist of two structural domains, F(1) - containing the extramembraneous catalytic core, and F(0) - containing the membrane proton channel, linked together by a central stalk and a peripheral stalk. During catalysis, ATP synthesis in the catalytic domain of F(1) is coupled via a rotary mechanism of the central stalk subunits to proton translocation. Part of the complex F(1) domain and of the central stalk which is part of the complex rotary element. Rotation of the central stalk against the surrounding alpha(3)beta(3) subunits leads to hydrolysis of ATP in three separate catalytic sites on the beta subunits. The protein is Putative ATP synthase subunit epsilon, mitochondrial of Caenorhabditis elegans.